Consider the following 398-residue polypeptide: Type III polyketide synthase pspB (398 aa).

Residues Lys-47 and 47-54 (KLLQINRS) contribute to the CoA site. Cys-152 acts as the Nucleophile in catalysis. 214-215 (SD) contacts substrate. CoA is bound by residues Leu-267, Gly-321, 321-324 (GGEA), and Ala-324.

Belongs to the thiolase-like superfamily. Chalcone/stilbene synthases family. In terms of assembly, homodimer.

It carries out the reaction 11 malonyl-CoA + acetyl-CoA + S-adenosyl-L-methionine + 12 NADPH + 22 H(+) = soppiline B + S-adenosyl-L-homocysteine + 12 CO2 + 12 NADP(+) + 12 CoA + 8 H2O. It functions in the pathway secondary metabolite biosynthesis. In terms of biological role, type III polyketide synthase; part of the gene cluster that mediates the biosynthesis of the alkylresorcinols called soppilines. The biosynthesis starts with the HR-PKS pspA-catalyzed carbon chain assembly through nine chain elongation cycles, using acetyl CoA and malonyl CoA as a starter and extender units, respectively, to produce the polyketide soppiline A. In the first round, the KR, DH, and CMeT domains work to produce 2-methyl-2-butenyl thioester. In rounds 2 to 5, the KR, DH, and ER domains fully catalyze the reduction of the elongated beta-ketothioester, resulting in the insertion of eight methylene units. The unusual Z,E,Z-triene motif is likely constructed during rounds 6 to 8. Typically, the DH domain introduces a double bond at an alpha,beta-position of an elongated polyketide chain, with the dehydration of a beta-hydroxy group. The last extension cycle would be carried out with L-oriented beta-ketoreduction by the KR domain to produce beta-hydroxy carboxylic acid soppiline A. The type III PKS pspB intercepts the elongated polyketide chain at round 8 from the HR-PKS pspA, followed by a tri-keto extension and decarboxylative aldol cyclization to produce 1,3,5-trisubstituted alkylresorcinol soppiline B. Subsequently, the cytochrome P450 monooxygenase pspC catalyzes three-step oxidations at the C-4 methyl group to carboxylic acid to yield soppiline C. The chain is Type III polyketide synthase pspB from Penicillium soppii.